Here is a 612-residue protein sequence, read N- to C-terminus: Dihydroxy-acid dehydratase (612 aa).

Asp-81 is a Mg(2+) binding site. Cys-122 contributes to the [2Fe-2S] cluster binding site. Mg(2+)-binding residues include Asp-123 and Lys-124. N6-carboxylysine is present on Lys-124. Residue Cys-195 participates in [2Fe-2S] cluster binding. Glu-491 is a binding site for Mg(2+). Residue Ser-517 is the Proton acceptor of the active site.

It belongs to the IlvD/Edd family. As to quaternary structure, homodimer. [2Fe-2S] cluster serves as cofactor. It depends on Mg(2+) as a cofactor.

It carries out the reaction (2R)-2,3-dihydroxy-3-methylbutanoate = 3-methyl-2-oxobutanoate + H2O. The catalysed reaction is (2R,3R)-2,3-dihydroxy-3-methylpentanoate = (S)-3-methyl-2-oxopentanoate + H2O. Its pathway is amino-acid biosynthesis; L-isoleucine biosynthesis; L-isoleucine from 2-oxobutanoate: step 3/4. It participates in amino-acid biosynthesis; L-valine biosynthesis; L-valine from pyruvate: step 3/4. Its function is as follows. Functions in the biosynthesis of branched-chain amino acids. Catalyzes the dehydration of (2R,3R)-2,3-dihydroxy-3-methylpentanoate (2,3-dihydroxy-3-methylvalerate) into 2-oxo-3-methylpentanoate (2-oxo-3-methylvalerate) and of (2R)-2,3-dihydroxy-3-methylbutanoate (2,3-dihydroxyisovalerate) into 2-oxo-3-methylbutanoate (2-oxoisovalerate), the penultimate precursor to L-isoleucine and L-valine, respectively. The sequence is that of Dihydroxy-acid dehydratase from Haemophilus influenzae (strain 86-028NP).